The primary structure comprises 380 residues: Cytochrome b (380 aa).

4 consecutive transmembrane segments (helical) span residues 34 to 54, 78 to 99, 114 to 134, and 179 to 199; these read FGSL…LLAM, WLIR…YLHI, WNTG…GYVL, and FFAL…IHLT. 2 residues coordinate heme b: His-84 and His-98. Heme b is bound by residues His-183 and His-197. His-202 is an a ubiquinone binding site. 4 consecutive transmembrane segments (helical) span residues 227 to 247, 289 to 309, 321 to 341, and 348 to 368; these read TKDT…ALFS, LGGV…PLLH, LSQL…WIGS, and FIII…ILFP.

The protein belongs to the cytochrome b family. In terms of assembly, the cytochrome bc1 complex contains 11 subunits: 3 respiratory subunits (MT-CYB, CYC1 and UQCRFS1), 2 core proteins (UQCRC1 and UQCRC2) and 6 low-molecular weight proteins (UQCRH/QCR6, UQCRB/QCR7, UQCRQ/QCR8, UQCR10/QCR9, UQCR11/QCR10 and a cleavage product of UQCRFS1). This cytochrome bc1 complex then forms a dimer. Heme b serves as cofactor.

Its subcellular location is the mitochondrion inner membrane. Its function is as follows. Component of the ubiquinol-cytochrome c reductase complex (complex III or cytochrome b-c1 complex) that is part of the mitochondrial respiratory chain. The b-c1 complex mediates electron transfer from ubiquinol to cytochrome c. Contributes to the generation of a proton gradient across the mitochondrial membrane that is then used for ATP synthesis. The sequence is that of Cytochrome b (MT-CYB) from Aptenodytes patagonicus (King penguin).